The chain runs to 52 residues: Mitogenic lectin alpha chain (52 aa).

The protein belongs to the leguminous lectin family. As to quaternary structure, tetramer of two alpha and two beta chains.

The sequence is that of Mitogenic lectin alpha chain from Vicia sativa (Spring vetch).